Here is a 707-residue protein sequence, read N- to C-terminus: Protein kinase C-like 1B (707 aa).

The region spanning 1–114 (MLFTGTVRVR…KIGSANDIWV (114 aa)) is the C2 domain. Phorbol-ester/DAG-type zinc fingers lie at residues 170–220 (GHKF…VWKC) and 248–298 (PHRF…ANNC). The disordered stretch occupies residues 323-368 (SKKKPSIMTDTSTDISGSSNSENSGYLQQISEDDSGTTSSRSASKV). Residues 330-365 (MTDTSTDISGSSNSENSGYLQQISEDDSGTTSSRSA) show a composition bias toward polar residues. The region spanning 378 to 638 (FTFMKVLGKG…EDAIRAHPFF (261 aa)) is the Protein kinase domain. Residues 384-392 (LGKGSFGKV) and Lys-407 each bind ATP. Asp-502 (proton acceptor) is an active-site residue. An AGC-kinase C-terminal domain is found at 639–707 (REIDWDALES…FSFINPHFTY (69 aa)).

Belongs to the protein kinase superfamily. AGC Ser/Thr protein kinase family. PKC subfamily. As to expression, expressed selectively in neurons that receive, transmit and process environmental signals.

The protein localises to the membrane. It is found in the cytoplasm. The protein resides in the cytoskeleton. The enzyme catalyses L-seryl-[protein] + ATP = O-phospho-L-seryl-[protein] + ADP + H(+). It catalyses the reaction L-threonyl-[protein] + ATP = O-phospho-L-threonyl-[protein] + ADP + H(+). Its function is as follows. PKC is activated by diacylglycerol which in turn phosphorylates a range of cellular proteins. PKC also serves as the receptor for phorbol esters, a class of tumor promoters. Involved in neuropeptide secretion in motor axons. Likely to act via the extracellular signal-regulated kinase/mitogen-activated protein kinase (ERK/MAPK) pathway in the signaling response to various sensory neurons; temperature, odor, taste, and osmolality. Its role in regulation differs depending on the neuron in which it is acting; thermosensation in AFD neurons, osmolality in ASH neurons, olfactory perception in AWA and AWC neurons. Promotes dauer formation mediated by the insulin/IGF pathway. Required for resistance to antimitotic toxins. In Caenorhabditis elegans, this protein is Protein kinase C-like 1B.